The following is a 523-amino-acid chain: Tyrosine-protein kinase transforming protein Src (523 aa).

The interval 1-50 is disordered; sequence MGSSKSKPKDPSQRRRSLEPPDSTHHGGFPASQTPNKTAAPDTHRTPSRS. Glycine 2 carries N-myristoyl glycine; by host lipidation. The segment covering 7–25 has biased composition (basic and acidic residues); that stretch reads KPKDPSQRRRSLEPPDSTH. One can recognise an SH3 domain in the interval 71–139; it reads TSPQRAGALA…PSNYVAPSDS (69 aa). In terms of domain architecture, SH2 spans 145–242; the sequence is WYFGKITRRE…GLCHRLTNVC (98 aa). Residues 264 to 514 form the Protein kinase domain; it reads LRLEVKLGQG…TFEYLQAQLL (251 aa). Residues 270–278 and lysine 292 each bind ATP; that span reads LGQGYFGEV. Aspartate 383 serves as the catalytic Proton acceptor. Phosphotyrosine; by autocatalysis is present on tyrosine 413.

It belongs to the protein kinase superfamily. Tyr protein kinase family. SRC subfamily. Homodimer. Post-translationally, the phosphorylated form is termed pp60v-src.

The enzyme catalyses L-tyrosyl-[protein] + ATP = O-phospho-L-tyrosyl-[protein] + ADP + H(+). Functionally, this phosphoprotein, required for both the initiation and the maintenance of neoplastic transformation, is a protein kinase that catalyzes the phosphorylation of tyrosine residues in vitro. This is Tyrosine-protein kinase transforming protein Src (V-SRC) from Gallus gallus (Chicken).